The following is a 362-amino-acid chain: MKLELSLEQWQQVKDFAIRNLNLSSISKADCDLSEYIPYYNKWLENNYHADLEYMVKHGSKRFIPNELVPGTNSVIVATLNYLNRPVNVKTEVKRLRTTSNIADISIYAHGRDYHKVMKKKLQQLGEFIDELTGGHQFRVFTDSAPVLERPLAEKAGLGWQGKSSMLMNKAQGSFFFIGVIYSNLDLSKLPDSPKHQDSCGKCQACIKLCPTGAIQPGKMIDSRKCISYLTIENKGSIPLELRDKIGTRIYGCDDCQLVCPFNNYAPITTEKDFQQRDFLVNKPLLELLAWSEKDFDKYTQGSAIRRIGYAAWIRNIAIAVGNSPFNQDNIQALELKKLEFSDNQLVLEHLDWAINKQKLLS.

The Proton donor role is filled by Asp-143. A 4Fe-4S ferredoxin-type domain is found at 191-220 (PDSPKHQDSCGKCQACIKLCPTGAIQPGKM). 8 residues coordinate [4Fe-4S] cluster: Cys-200, Cys-203, Cys-206, Cys-210, Cys-226, Cys-253, Cys-256, and Cys-260.

Belongs to the QueG family. In terms of assembly, monomer. Cob(II)alamin serves as cofactor. The cofactor is [4Fe-4S] cluster.

The protein resides in the cytoplasm. The catalysed reaction is epoxyqueuosine(34) in tRNA + AH2 = queuosine(34) in tRNA + A + H2O. The protein operates within tRNA modification; tRNA-queuosine biosynthesis. Functionally, catalyzes the conversion of epoxyqueuosine (oQ) to queuosine (Q), which is a hypermodified base found in the wobble positions of tRNA(Asp), tRNA(Asn), tRNA(His) and tRNA(Tyr). The sequence is that of Epoxyqueuosine reductase from Francisella cf. novicida (strain Fx1).